The chain runs to 86 residues: Small ribosomal subunit protein bS20 (86 aa).

Residues 1 to 25 (MANIKSAIKRAKTSEKRRVANSQEK) are disordered.

It belongs to the bacterial ribosomal protein bS20 family.

Its function is as follows. Binds directly to 16S ribosomal RNA. This chain is Small ribosomal subunit protein bS20, found in Exiguobacterium sp. (strain ATCC BAA-1283 / AT1b).